Consider the following 430-residue polypeptide: Glucose-6-phosphate isomerase (430 aa).

Glu284 acts as the Proton donor in catalysis. Catalysis depends on residues His305 and Lys420.

The protein belongs to the GPI family.

The protein localises to the cytoplasm. The catalysed reaction is alpha-D-glucose 6-phosphate = beta-D-fructose 6-phosphate. The protein operates within carbohydrate biosynthesis; gluconeogenesis. Its pathway is carbohydrate degradation; glycolysis; D-glyceraldehyde 3-phosphate and glycerone phosphate from D-glucose: step 2/4. Catalyzes the reversible isomerization of glucose-6-phosphate to fructose-6-phosphate. This chain is Glucose-6-phosphate isomerase, found in Mycoplasmopsis synoviae (strain 53) (Mycoplasma synoviae).